The following is a 1061-amino-acid chain: Bifunctional cytochrome P450/NADPH--P450 reductase 1 (1061 aa).

A cytochrome P450 region spans residues 1–475 (MKETSPIPQP…AEKAAPDEQK (475 aa)). Cys403 is a heme binding site. The tract at residues 476–1061 (EKTEAKGASV…MYAKDVWAGI (586 aa)) is NADPH--P450 reductase. Residues 493–632 (LLVLYGSDTG…QLDEWKKSMW (140 aa)) enclose the Flavodoxin-like domain. FMN contacts are provided by residues 499–504 (SDTGTA), 546–549 (SYNG), 580–582 (CGD), and 588–590 (TYQ). The 234-residue stretch at 671 to 904 (YEASHASIAE…RTPESRFQLP (234 aa)) folds into the FAD-binding FR-type domain.

It in the N-terminal section; belongs to the cytochrome P450 family. FAD is required as a cofactor. FMN serves as cofactor. The cofactor is heme b.

It is found in the cytoplasm. The catalysed reaction is an organic molecule + reduced [NADPH--hemoprotein reductase] + O2 = an alcohol + oxidized [NADPH--hemoprotein reductase] + H2O + H(+). It catalyses the reaction 2 oxidized [cytochrome P450] + NADPH = 2 reduced [cytochrome P450] + NADP(+) + H(+). In terms of biological role, functions as a fatty acid monooxygenase. Catalyzes hydroxylation of a range of long-chain fatty acids, with a preference for long-chain unsaturated and branched-chain fatty acids over saturated fatty acids. Hydroxylation of myristic acid occurs mainly at the omega-2 position. Also displays a NADPH-dependent reductase activity in the C-terminal domain, which allows electron transfer from NADPH to the heme iron of the cytochrome P450 N-terminal domain. Is also able to catalyze efficient oxidation of sodium dodecyl sulfate (SDS). This is Bifunctional cytochrome P450/NADPH--P450 reductase 1 from Bacillus subtilis (strain 168).